A 159-amino-acid chain; its full sequence is NADH-quinone oxidoreductase subunit I (159 aa).

4Fe-4S ferredoxin-type domains follow at residues 51–80 (RRYENGEERCIACKLCEAICPAQAIVIEAD) and 90–119 (TRYDIDMTKCIYCGLCQEACPVDAIVEGPN). Cysteine 60, cysteine 63, cysteine 66, cysteine 70, cysteine 99, cysteine 102, cysteine 105, and cysteine 109 together coordinate [4Fe-4S] cluster.

It belongs to the complex I 23 kDa subunit family. As to quaternary structure, NDH-1 is composed of 14 different subunits. Subunits NuoA, H, J, K, L, M, N constitute the membrane sector of the complex. [4Fe-4S] cluster is required as a cofactor.

Its subcellular location is the cell inner membrane. The catalysed reaction is a quinone + NADH + 5 H(+)(in) = a quinol + NAD(+) + 4 H(+)(out). In terms of biological role, NDH-1 shuttles electrons from NADH, via FMN and iron-sulfur (Fe-S) centers, to quinones in the respiratory chain. The immediate electron acceptor for the enzyme in this species is believed to be ubiquinone. Couples the redox reaction to proton translocation (for every two electrons transferred, four hydrogen ions are translocated across the cytoplasmic membrane), and thus conserves the redox energy in a proton gradient. This is NADH-quinone oxidoreductase subunit I from Rickettsia conorii (strain ATCC VR-613 / Malish 7).